Here is a 191-residue protein sequence, read N- to C-terminus: Fe/S biogenesis protein NfuA (191 aa).

Cysteine 149 and cysteine 152 together coordinate [4Fe-4S] cluster.

It belongs to the NfuA family. In terms of assembly, homodimer. [4Fe-4S] cluster is required as a cofactor.

Functionally, involved in iron-sulfur cluster biogenesis. Binds a 4Fe-4S cluster, can transfer this cluster to apoproteins, and thereby intervenes in the maturation of Fe/S proteins. Could also act as a scaffold/chaperone for damaged Fe/S proteins. The polypeptide is Fe/S biogenesis protein NfuA (Serratia proteamaculans (strain 568)).